The sequence spans 329 residues: U5 small nuclear ribonucleoprotein TSSC4 (329 aa).

2 disordered regions span residues 1–88 and 104–156; these read MAEA…MSST and ARRA…PDYV. The span at 22-41 shows a compositional bias: low complexity; sequence DTLPSDTVSLSDSDSDLSLP. Phosphoserine is present on residues Ser60, Ser67, Ser86, Ser132, Ser143, and Ser146. The interval 77 to 104 is hom2; mediates interaction with the U5 snRNP complexes and required for spliceosomal tri-snRNP complex assembly; that stretch reads VQPFHLRGMSSTFSQRSRDIFDCLEGAA. The interval 149–316 is interaction with SNRNP200; sequence VPPVPDYVAH…SRKRSRDHFR (168 aa). Positions 150–186 are hom3; mediates interaction with the U5 snRNP complexes; it reads PPVPDYVAHPERWTKYSLEDVTEVSEQSNQATALAFL. Positions 201 to 250 are hom4; necessary for interaction with the PRPF19 complex and required for spliceosomal tri-snRNP complex assembly; it reads FNQDPSSCGEGRVIFTKPVRGVEARHERKRVLGKVGEPGRGGLGNPATDR. Lys217 is modified (N6-acetyllysine). A disordered region spans residues 221-329; that stretch reads GVEARHERKR…SSPEDPGAEV (109 aa). Position 265 is a phosphoserine (Ser265). The segment covering 306-317 has biased composition (basic residues); the sequence is GSRKRSRDHFRN. Ser321 is subject to Phosphoserine.

It belongs to the TSSC4 family. As to quaternary structure, interacts in a RNA-independent manner with distinct U5 snRNP-containing complexes, the mono-U5 snRNP and the post-splicing U5 snRNP-PRPF19 complex. Interacts with SNRNP200; the interaction is direct, excludes recruitment of C9ORF78 and WBP4 to SNRNP200 and negatively regulates its RNA helicase activity. Interacts with PRPF8; the interaction is direct. Expressed in fetal brain, lung, liver and kidney. Widely expressed in adult tissues.

It localises to the nucleus. Its subcellular location is the cytoplasm. In terms of biological role, protein associated with the U5 snRNP, during its maturation and its post-splicing recycling and which is required for spliceosomal tri-snRNP complex assembly in the nucleus. Has a molecular sequestering activity and transiently hinders SNRNP200 binding sites for constitutive splicing factors that intervene later during the assembly of the spliceosome and splicing. Together with its molecular sequestering activity, may also function as a molecular adapter and placeholder, coordinating the assembly of the U5 snRNP and its association with the U4/U6 di-snRNP. The polypeptide is U5 small nuclear ribonucleoprotein TSSC4 (Homo sapiens (Human)).